The primary structure comprises 120 residues: Large ribosomal subunit protein uL18 (120 aa).

Belongs to the universal ribosomal protein uL18 family. Part of the 50S ribosomal subunit; part of the 5S rRNA/L5/L18/L25 subcomplex. Contacts the 5S and 23S rRNAs.

This is one of the proteins that bind and probably mediate the attachment of the 5S RNA into the large ribosomal subunit, where it forms part of the central protuberance. The polypeptide is Large ribosomal subunit protein uL18 (Rhodopseudomonas palustris (strain BisA53)).